The chain runs to 272 residues: Glycerol-3-phosphate acyltransferase (272 aa).

Transmembrane regions (helical) follow at residues 9 to 29, 60 to 80, 99 to 119, 149 to 169, 173 to 193, and 226 to 246; these read IIIL…GILI, AIVM…CLLI, VIIY…CFYF, ASIS…ICLI, VSLA…IPHL, and LNWW…VLVI.

The protein belongs to the PlsY family. As to quaternary structure, probably interacts with PlsX.

Its subcellular location is the cell membrane. It catalyses the reaction an acyl phosphate + sn-glycerol 3-phosphate = a 1-acyl-sn-glycero-3-phosphate + phosphate. Its pathway is lipid metabolism; phospholipid metabolism. Functionally, catalyzes the transfer of an acyl group from acyl-phosphate (acyl-PO(4)) to glycerol-3-phosphate (G3P) to form lysophosphatidic acid (LPA). This enzyme utilizes acyl-phosphate as fatty acyl donor, but not acyl-CoA or acyl-ACP. This Malacoplasma penetrans (strain HF-2) (Mycoplasma penetrans) protein is Glycerol-3-phosphate acyltransferase.